Consider the following 589-residue polypeptide: Transcription factor 4 (589 aa).

Disordered stretches follow at residues methionine 1–lysine 124, aspartate 138–asparagine 163, proline 184–glycine 239, histidine 254–leucine 297, serine 384–asparagine 492, and lysine 556–methionine 589. 2 positions are modified to phosphoserine: serine 8 and serine 13. Positions glycine 56–asparagine 74 are enriched in polar residues. The leucine-zipper stretch occupies residues methionine 136–tyrosine 157. Residues proline 184–isoleucine 224 are compositionally biased toward polar residues. Low complexity predominate over residues threonine 255–proline 266. Over residues asparagine 283–asparagine 292 the composition is skewed to polar residues. Serine 290 bears the Phosphoserine mark. The tract at residues arginine 380 to proline 403 is class A specific domain. 2 stretches are compositionally biased toward low complexity: residues leucine 385–glutamine 398 and glycine 421–glutamate 430. Serine 433 carries the phosphoserine modification. Basic and acidic residues-rich tracts occupy residues lysine 445–serine 461 and proline 477–asparagine 492. Positions glutamate 486–leucine 539 constitute a bHLH domain.

In terms of assembly, efficient DNA binding requires dimerization with another bHLH protein. Forms homo- or heterooligomers with myogenin. Interacts with HIVEP2. Interacts with NEUROD2. Interacts with AGBL1.

It is found in the nucleus. Transcription factor that binds to the immunoglobulin enhancer Mu-E5/KE5-motif. Involved in the initiation of neuronal differentiation. Activates transcription by binding to the E box (5'-CANNTG-3'). Binds to the E-box present in the somatostatin receptor 2 initiator element (SSTR2-INR) to activate transcription. Interacts with the CCAAT displacement protein (CDP2) to bind the tyrosine hydroxylase enhancer. The sequence is that of Transcription factor 4 (Tcf4) from Rattus norvegicus (Rat).